Consider the following 310-residue polypeptide: Acetylglutamate kinase (310 aa).

Substrate contacts are provided by residues Gly-74 to Gly-75, Arg-96, and Asn-201.

The protein belongs to the acetylglutamate kinase family. ArgB subfamily.

The protein localises to the cytoplasm. The catalysed reaction is N-acetyl-L-glutamate + ATP = N-acetyl-L-glutamyl 5-phosphate + ADP. Its pathway is amino-acid biosynthesis; L-arginine biosynthesis; N(2)-acetyl-L-ornithine from L-glutamate: step 2/4. In terms of biological role, catalyzes the ATP-dependent phosphorylation of N-acetyl-L-glutamate. The protein is Acetylglutamate kinase of Arthrobacter sp. (strain FB24).